Consider the following 195-residue polypeptide: uncharacterized protein (195 aa).

This is an uncharacterized protein from Magallana gigas (Pacific oyster).